The primary structure comprises 408 residues: Imidazolonepropionase (408 aa).

2 residues coordinate Fe(3+): histidine 73 and histidine 75. Zn(2+)-binding residues include histidine 73 and histidine 75. The 4-imidazolone-5-propanoate site is built by arginine 82, tyrosine 145, and histidine 178. N-formimidoyl-L-glutamate is bound at residue tyrosine 145. A Fe(3+)-binding site is contributed by histidine 243. Histidine 243 is a binding site for Zn(2+). Glutamine 246 serves as a coordination point for 4-imidazolone-5-propanoate. Aspartate 318 contributes to the Fe(3+) binding site. Residue aspartate 318 participates in Zn(2+) binding. N-formimidoyl-L-glutamate is bound by residues asparagine 320 and glycine 322. Serine 323 is a binding site for 4-imidazolone-5-propanoate.

This sequence belongs to the metallo-dependent hydrolases superfamily. HutI family. Zn(2+) is required as a cofactor. Requires Fe(3+) as cofactor.

Its subcellular location is the cytoplasm. It carries out the reaction 4-imidazolone-5-propanoate + H2O = N-formimidoyl-L-glutamate. It participates in amino-acid degradation; L-histidine degradation into L-glutamate; N-formimidoyl-L-glutamate from L-histidine: step 3/3. Its function is as follows. Catalyzes the hydrolytic cleavage of the carbon-nitrogen bond in imidazolone-5-propanoate to yield N-formimidoyl-L-glutamate. It is the third step in the universal histidine degradation pathway. In Shewanella sp. (strain ANA-3), this protein is Imidazolonepropionase.